The primary structure comprises 338 residues: N-acetyl-gamma-glutamyl-phosphate reductase (338 aa).

The active site involves Cys148.

The protein belongs to the NAGSA dehydrogenase family. Type 1 subfamily.

The protein localises to the cytoplasm. The enzyme catalyses N-acetyl-L-glutamate 5-semialdehyde + phosphate + NADP(+) = N-acetyl-L-glutamyl 5-phosphate + NADPH + H(+). The protein operates within amino-acid biosynthesis; L-arginine biosynthesis; N(2)-acetyl-L-ornithine from L-glutamate: step 3/4. Catalyzes the NADPH-dependent reduction of N-acetyl-5-glutamyl phosphate to yield N-acetyl-L-glutamate 5-semialdehyde. This Leptospira interrogans serogroup Icterohaemorrhagiae serovar Lai (strain 56601) protein is N-acetyl-gamma-glutamyl-phosphate reductase.